Consider the following 190-residue polypeptide: Putative cyclic ADP-D-ribose synthase ThsB (190 aa).

It belongs to the Thoeris B TIR-like family. As to quaternary structure, homodimer.

It is found in the cytoplasm. With respect to regulation, activated upon phage infection. In terms of biological role, TIR-like domain-containing component of the Thoeris antiviral defense system, composed of ThsA and ThsB. Expression of ThsA and ThsB in B.subtilis (strain BEST7003) confers resistance to phages SBSphiC, SBSphiJ and SPO1. Phage infection activates this protein, generating a signal molecule that in turn activates ThsA. Functionally, probably hydrolyzes NAD(+) to make a cyclic ADP-D-ribose (cADPR) signaling molecule; might make 3'cADPR. The polypeptide is Putative cyclic ADP-D-ribose synthase ThsB (Bacillus amyloliquefaciens (strain Y2) (Bacillus amyloliquefaciens subsp. plantarum (strain B9601-Y2))).